The sequence spans 934 residues: UPF0182 protein sync_1321 (934 aa).

Helical transmembrane passes span 2 to 22 (AKIIWTIGRFGLLLIPLIVII), 45 to 65 (LLLQLGGALFAFLFVGSCALW), 86 to 106 (GYRYGFCLLACLLVLLSVLAI), 129 to 149 (FSTGWPLLSLSILMLTLIMFG), 165 to 185 (VCICLIVARSWGLWSLAFSIP), 208 to 228 (IAFGLELVLLQLSLTLSTALW), 251 to 271 (HGLRPGFALVLMSFSGLMWLS), 300 to 320 (LGSIALLVLAFVVLPSPFSSV), and 327 to 347 (LILAFIAIASFGLEMVLFPLM).

It belongs to the UPF0182 family.

It localises to the cell membrane. The chain is UPF0182 protein sync_1321 from Synechococcus sp. (strain CC9311).